A 341-amino-acid polypeptide reads, in one-letter code: UDP-N-acetylenolpyruvoylglucosamine reductase (341 aa).

In terms of domain architecture, FAD-binding PCMH-type spans 15 to 185; it reads VTQSCLSLIE…TAVGLRLPKT (171 aa). Residue R161 is part of the active site. S231 (proton donor) is an active-site residue. The active site involves E327.

This sequence belongs to the MurB family. The cofactor is FAD.

The protein resides in the cytoplasm. It carries out the reaction UDP-N-acetyl-alpha-D-muramate + NADP(+) = UDP-N-acetyl-3-O-(1-carboxyvinyl)-alpha-D-glucosamine + NADPH + H(+). It functions in the pathway cell wall biogenesis; peptidoglycan biosynthesis. Cell wall formation. In Shewanella oneidensis (strain ATCC 700550 / JCM 31522 / CIP 106686 / LMG 19005 / NCIMB 14063 / MR-1), this protein is UDP-N-acetylenolpyruvoylglucosamine reductase.